Consider the following 533-residue polypeptide: Glucose-6-phosphate isomerase (533 aa).

Glutamate 322 (proton donor) is an active-site residue. Active-site residues include histidine 351 and lysine 455.

The protein belongs to the GPI family.

The protein resides in the cytoplasm. The catalysed reaction is alpha-D-glucose 6-phosphate = beta-D-fructose 6-phosphate. It participates in carbohydrate biosynthesis; gluconeogenesis. It functions in the pathway carbohydrate degradation; glycolysis; D-glyceraldehyde 3-phosphate and glycerone phosphate from D-glucose: step 2/4. Catalyzes the reversible isomerization of glucose-6-phosphate to fructose-6-phosphate. This chain is Glucose-6-phosphate isomerase, found in Desulfitobacterium hafniense (strain DSM 10664 / DCB-2).